The primary structure comprises 126 residues: Arginine decarboxylase proenzyme (126 aa).

Residue serine 74 is the Schiff-base intermediate with substrate; via pyruvic acid of the active site. At serine 74 the chain carries Pyruvic acid (Ser); by autocatalysis. Catalysis depends on histidine 79, which acts as the Proton acceptor; for processing activity. The active-site Proton donor; for catalytic activity is cysteine 94.

Belongs to the prokaryotic AdoMetDC family. Type 1 subfamily. In terms of assembly, heterooctamer of four alpha and four beta chains arranged as a tetramer of alpha/beta heterodimers. Pyruvate is required as a cofactor. In terms of processing, is synthesized initially as an inactive proenzyme. Formation of the active enzyme involves a self-maturation process in which the active site pyruvoyl group is generated from an internal serine residue via an autocatalytic post-translational modification. Two non-identical subunits are generated from the proenzyme in this reaction, and the pyruvate is formed at the N-terminus of the alpha chain, which is derived from the carboxyl end of the proenzyme. The post-translation cleavage follows an unusual pathway, termed non-hydrolytic serinolysis, in which the side chain hydroxyl group of the serine supplies its oxygen atom to form the C-terminus of the beta chain, while the remainder of the serine residue undergoes an oxidative deamination to produce ammonia and the pyruvoyl group blocking the N-terminus of the alpha chain.

It carries out the reaction L-arginine + H(+) = agmatine + CO2. It participates in amine and polyamine biosynthesis; agmatine biosynthesis; agmatine from L-arginine: step 1/1. In terms of biological role, specifically catalyzes the decarboxylation of L-arginine to agmatine. Has no S-adenosylmethionine decarboxylase (AdoMetDC) activity. In Pyrobaculum islandicum (strain DSM 4184 / JCM 9189 / GEO3), this protein is Arginine decarboxylase proenzyme.